A 485-amino-acid chain; its full sequence is Aspartyl protease family protein 2 (485 aa).

An N-terminal signal peptide occupies residues 1-23 (MVGRRKALLFSLCFFFLSLPSFS). Residues 43–71 (PVSFQPDSDSESLLESEFESGSDSESSSS) form a disordered region. Positions 50–64 (SDSESLLESEFESGS) are enriched in acidic residues. The 339-residue stretch at 142–480 (YFTRLGVGTP…DLASSRVGFA (339 aa)) folds into the Peptidase A1 domain. Residues aspartate 160 and aspartate 365 contribute to the active site.

Belongs to the peptidase A1 family.

In terms of biological role, aspartyl protease. Not able to cleave BAG6. The polypeptide is Aspartyl protease family protein 2 (Arabidopsis thaliana (Mouse-ear cress)).